The following is a 188-amino-acid chain: Meiotically up-regulated gene 94 protein (188 aa).

It is found in the cytoplasm. The protein resides in the nucleus. In terms of biological role, has a role in meiosis. This is Meiotically up-regulated gene 94 protein (mug94) from Schizosaccharomyces pombe (strain 972 / ATCC 24843) (Fission yeast).